The chain runs to 91 residues: UPF0250 protein PputGB1_4855 (91 aa).

Belongs to the UPF0250 family.

In Pseudomonas putida (strain GB-1), this protein is UPF0250 protein PputGB1_4855.